The primary structure comprises 129 residues: MKLFTGLVFCSLVLGVSSQWYSFLGEAAQGAWDMWRAYSDMREANYIGADKYFHARGNYDAAQRGPGGAWAAKVISDARENSQRVTDFFRHGNSGHGAEDSKADQAANEWGRSGKDPNHFRPAGLPSKY.

Residues Met-1–Ser-18 form the signal peptide. Gln-19 carries the pyrrolidone carboxylic acid modification. Residues Phe-88–Tyr-129 form a disordered region. Positions Arg-112–Tyr-129 are cleaved as a propeptide — often cleaved during amyloidogenesis.

Belongs to the SAA family. As to expression, expressed by the liver; secreted in plasma.

The protein localises to the secreted. In terms of biological role, major acute phase reactant. Apolipoprotein of the HDL complex. This Felis catus (Cat) protein is Serum amyloid A protein (SAA1).